Here is a 105-residue protein sequence, read N- to C-terminus: Large ribosomal subunit protein uL24 (105 aa).

This sequence belongs to the universal ribosomal protein uL24 family. As to quaternary structure, part of the 50S ribosomal subunit.

Its function is as follows. One of two assembly initiator proteins, it binds directly to the 5'-end of the 23S rRNA, where it nucleates assembly of the 50S subunit. In terms of biological role, one of the proteins that surrounds the polypeptide exit tunnel on the outside of the subunit. The protein is Large ribosomal subunit protein uL24 of Xylella fastidiosa (strain M23).